The sequence spans 590 residues: Polypeptide N-acetylgalactosaminyltransferase 8 (590 aa).

The Cytoplasmic segment spans residues 1–11 (MCLDIWRHKKK). Residues 12-31 (VLPLLLLMAIGSIIYYLYTL) form a helical; Signal-anchor for type II membrane protein membrane-spanning segment. The Lumenal portion of the chain corresponds to 32–590 (KLEGERDESA…QHFWDNVKTQ (559 aa)). Asn-77 carries an N-linked (GlcNAc...) asparagine glycan. Disulfide bonds link Cys-117-Cys-345, Cys-336-Cys-419, Cys-459-Cys-475, Cys-502-Cys-517, and Cys-546-Cys-561. The catalytic subdomain A stretch occupies residues 127 to 236 (LPSVSVVITY…KGWLEPLIAP (110 aa)). Asp-168 contributes to the substrate binding site. Asp-220 serves as a coordination point for Mn(2+). Position 221 (Ser-221) interacts with substrate. His-222 serves as a coordination point for Mn(2+). An N-linked (GlcNAc...) asparagine glycan is attached at Asn-241. Positions 291-353 (PHKNPIMNGG…PCSRVGHLFR (63 aa)) are catalytic subdomain B. Trp-322 serves as a coordination point for substrate. His-350 contacts Mn(2+). Arg-353 is a binding site for substrate. Residues 446-573 (ASGVLQSISS…KNHKQQWKFG (128 aa)) form the Ricin B-type lectin domain.

The protein belongs to the glycosyltransferase 2 family. GalNAc-T subfamily. Requires Mn(2+) as cofactor. In terms of tissue distribution, expressed in developing oocytes and egg chambers. During embryonic stages 9-11, expressed in the primordium of the foregut, midgut and hindgut. During embryonic stages 12-13, expressed in the posterior midgut and hindgut. During embryonic stages 14-15, expression continues in the hindgut. No expression detected during embryonic stages 16-17 or in third instar larvae imaginal disks.

Its subcellular location is the golgi apparatus membrane. The catalysed reaction is L-seryl-[protein] + UDP-N-acetyl-alpha-D-galactosamine = a 3-O-[N-acetyl-alpha-D-galactosaminyl]-L-seryl-[protein] + UDP + H(+). It catalyses the reaction L-threonyl-[protein] + UDP-N-acetyl-alpha-D-galactosamine = a 3-O-[N-acetyl-alpha-D-galactosaminyl]-L-threonyl-[protein] + UDP + H(+). The protein operates within protein modification; protein glycosylation. Its function is as follows. Catalyzes the initial reaction in O-linked oligosaccharide biosynthesis, the transfer of an N-acetyl-D-galactosamine residue to a serine or threonine residue on the protein receptor. It can both act as a peptide transferase that transfers GalNAc onto unmodified peptide substrates, and as a glycopeptide transferase that requires the prior addition of a GalNAc on a peptide before adding additional GalNAc moieties. Prefers both EA2 and the diglycosylated Muc5AC-3/13 as substrates, albeit at very low levels fro Muc5AC-3/13. The sequence is that of Polypeptide N-acetylgalactosaminyltransferase 8 from Drosophila melanogaster (Fruit fly).